Consider the following 557-residue polypeptide: TBCC domain-containing protein 1 (557 aa).

Residues 290–435 form the C-CAP/cofactor C-like domain; that stretch reads TTKRAKIACN…LEDHMARTGL (146 aa).

The protein belongs to the TBCC family.

The protein localises to the cytoplasm. Its subcellular location is the cytoskeleton. It localises to the microtubule organizing center. It is found in the centrosome. The protein resides in the spindle pole. In terms of biological role, plays a role in the regulation of centrosome and Golgi apparatus positioning, with consequences on cell shape and cell migration. This Homo sapiens (Human) protein is TBCC domain-containing protein 1 (TBCCD1).